We begin with the raw amino-acid sequence, 231 residues long: Orotidine 5'-phosphate decarboxylase (231 aa).

Residues Asp-11, Lys-33, 60–69 (DLKFHDIPNT), Thr-120, Arg-181, Gln-190, Gly-210, and Arg-211 each bind substrate. The active-site Proton donor is Lys-62.

The protein belongs to the OMP decarboxylase family. Type 1 subfamily. As to quaternary structure, homodimer.

It carries out the reaction orotidine 5'-phosphate + H(+) = UMP + CO2. It functions in the pathway pyrimidine metabolism; UMP biosynthesis via de novo pathway; UMP from orotate: step 2/2. In terms of biological role, catalyzes the decarboxylation of orotidine 5'-monophosphate (OMP) to uridine 5'-monophosphate (UMP). The polypeptide is Orotidine 5'-phosphate decarboxylase (Vibrio atlanticus (strain LGP32) (Vibrio splendidus (strain Mel32))).